Reading from the N-terminus, the 366-residue chain is Inhibin alpha chain (366 aa).

The N-terminal stretch at 1 to 18 (MVLHLLLFLLLTPQGGHS) is a signal peptide. Positions 19-61 (CQGLELARELVLAKVRALFLDALGPPAVTREGGDPGVRRLPRR) are excised as a propeptide. Positions 62 to 232 (HALGGFTHRG…PPSGGERARR (171 aa)) are cleaved as a propeptide — inhibin alpha N-terminal region. N146 and N268 each carry an N-linked (GlcNAc...) asparagine glycan. 3 cysteine pairs are disulfide-bonded: C262-C328, C291-C363, and C295-C365. N302 is a glycosylation site (N-linked (GlcNAc...) asparagine; partial).

It belongs to the TGF-beta family. In terms of assembly, dimeric, linked by one or more disulfide bonds. Activin B is a dimer of alpha and beta-B. Inhibin A is a dimer of alpha and beta-A. Inhibin B is a dimer of alpha and beta-B. Interacts with TGFBR3L; this interaction regulates female fertility. Proteolytic processing yields a number of bioactive forms. The 20/23 kDa forms consist solely of the mature alpha chain, the 26/29 kDa forms consist of the most N-terminal propeptide linked through a disulfide bond to the mature alpha chain, the 50/53 kDa forms encompass the entire proprotein. Each type can be furthermore either mono- or diglycosylated, causing the mass difference. Originally found in ovary (granulosa cells) and testis (Sertoli cells), but widely distributed in many tissues including brain and placenta. In adrenal cortex expression is limited to the zona reticularis and the innermost zona fasciculata in the normal gland, extending centripetally into the zona fasciculata in hyperplasia. Also found in adrenocortical tumors. Also expressed in prostate epithelium of benign prostatic hyperplasia, in regions of basal cell hyperplasia and in nonmalignant regions of high grade prostate cancer. Only circulating inhibin B is found in male, whereas circulating inhibins A and B are found in female.

The protein localises to the secreted. Its function is as follows. Inhibins and activins inhibit and activate, respectively, the secretion of follitropin by the pituitary gland. Inhibins/activins are involved in regulating a number of diverse functions such as hypothalamic and pituitary hormone secretion, gonadal hormone secretion, germ cell development and maturation, erythroid differentiation, insulin secretion, nerve cell survival, embryonic axial development or bone growth, depending on their subunit composition. Inhibins appear to oppose the functions of activins. In terms of biological role, inhibin A is a dimer of alpha/INHA and beta-A/INHBA that functions as a feedback regulator in the hypothalamic-pituitary-gonadal (HPG) axis. Inhibits the secretion of FSH from the anterior pituitary gland by acting on pituitary gonadotrope cells. Antagonizes activin A by binding to the proteoglycan, betaglycan, and forming a stable complex with and, thereby, sequestering type II activin receptors while excluding type I receptor. Functionally, inhibin B is a dimer of alpha and beta-B that plays a crucial role in the regulation of the reproductive system by inhibiting the secretion of follicle-stimulating hormone (FSH) from the anterior pituitary gland. Thereby, maintains reproductive homeostasis in both males and females. Acts as a more potent suppressor of FSH release than inhibin A. Functions as competitive receptor antagonist binding activin type II receptors with high affinity in the presence of the TGF-beta type III coreceptor/TGFBR3L. The chain is Inhibin alpha chain (INHA) from Homo sapiens (Human).